We begin with the raw amino-acid sequence, 532 residues long: Membrane protein insertase YidC (532 aa).

Transmembrane regions (helical) follow at residues phenylalanine 7–methionine 27, leucine 336–isoleucine 356, glycine 413–isoleucine 433, leucine 450–isoleucine 470, and proline 492–isoleucine 512.

This sequence belongs to the OXA1/ALB3/YidC family. Type 1 subfamily. As to quaternary structure, interacts with the Sec translocase complex via SecD. Specifically interacts with transmembrane segments of nascent integral membrane proteins during membrane integration.

The protein resides in the cell membrane. In terms of biological role, required for the insertion and/or proper folding and/or complex formation of integral membrane proteins into the membrane. Involved in integration of membrane proteins that insert both dependently and independently of the Sec translocase complex, as well as at least some lipoproteins. Aids folding of multispanning membrane proteins. In Buchnera aphidicola subsp. Acyrthosiphon pisum (strain 5A), this protein is Membrane protein insertase YidC.